Consider the following 1044-residue polypeptide: Translation initiation factor IF-2 (1044 aa).

The tract at residues 55–458 (EAQEGQGAGK…KRKASAQERR (404 aa)) is disordered. Low complexity predominate over residues 57–77 (QEGQGAGKSAAKSAKPAAQPK). Residues 104–146 (LSEKRERRPLTERRPLAERRPLAERPLVDRPVTERPLAERPAA) show a composition bias toward basic and acidic residues. 3 stretches are compositionally biased toward low complexity: residues 147-168 (ELRP…AQPV), 190-231 (KAQP…QKPA), and 254-265 (ASSRPASAAPAA). Basic and acidic residues predominate over residues 267–281 (GEKRPAAAAERREEP). Composition is skewed to low complexity over residues 352-375 (AAGQ…AGAP) and 383-395 (APQR…APLA). Residues 399–444 (LDPKVAEQAKAGEGKPRYGQSGDKRRADLYDRREHPSSQPSEEKLF) are compositionally biased toward basic and acidic residues. In terms of domain architecture, tr-type G spans 546–714 (PRHPVVTIMG…ILVLAEVSDL (169 aa)). The segment at 555-562 (GHVDHGKT) is G1. A GTP-binding site is contributed by 555-562 (GHVDHGKT). A G2 region spans residues 580 to 584 (GITQH). The G3 stretch occupies residues 601 to 604 (DTPG). Residues 601-605 (DTPGH) and 655-658 (NKID) each bind GTP. Positions 655–658 (NKID) are G4. The segment at 691–693 (SAK) is G5.

It belongs to the TRAFAC class translation factor GTPase superfamily. Classic translation factor GTPase family. IF-2 subfamily.

Its subcellular location is the cytoplasm. Its function is as follows. One of the essential components for the initiation of protein synthesis. Protects formylmethionyl-tRNA from spontaneous hydrolysis and promotes its binding to the 30S ribosomal subunits. Also involved in the hydrolysis of GTP during the formation of the 70S ribosomal complex. The protein is Translation initiation factor IF-2 of Symbiobacterium thermophilum (strain DSM 24528 / JCM 14929 / IAM 14863 / T).